We begin with the raw amino-acid sequence, 215 residues long: PRELI domain-containing protein 1, mitochondrial (215 aa).

In terms of domain architecture, PRELI/MSF1 spans T36–P174.

As to quaternary structure, forms a complex with TRIAP1 in the mitochondrion intermembrane space. In terms of tissue distribution, expressed within the blood islands and in the liver.

The protein localises to the mitochondrion. Its subcellular location is the mitochondrion intermembrane space. The enzyme catalyses a 1,2-diacyl-sn-glycero-3-phosphate(in) = a 1,2-diacyl-sn-glycero-3-phosphate(out). Its function is as follows. Involved in the modulation of the mitochondrial apoptotic pathway by ensuring the accumulation of cardiolipin (CL) in mitochondrial membranes. The TRIAP1:PRELID1 complex probably functions as a PA transporter across the mitochondrion intermembrane space to provide PA for CL synthesis in the inner membrane. May be involved in hematopoiesis during avian development. In Gallus gallus (Chicken), this protein is PRELI domain-containing protein 1, mitochondrial (PRELID1).